We begin with the raw amino-acid sequence, 1295 residues long: Phosphoribosylformylglycinamidine synthase (1295 aa).

Residues 305 to 327 (WPGAATGSGGEIRDEGATGRGAK) form a disordered region. Residues 307-318 (GAATGSGGEIRD) and Ala-678 contribute to the ATP site. Mg(2+) is bound by residues Glu-718, Asn-722, and Asp-884. Ser-886 is a binding site for ATP. The region spanning 1042-1295 (VAVLREQGVN…IFRNARKQLG (254 aa)) is the Glutamine amidotransferase type-1 domain. The Nucleophile role is filled by Cys-1135. Residues His-1260 and Glu-1262 contribute to the active site.

The protein in the N-terminal section; belongs to the FGAMS family. In terms of assembly, monomer.

The protein localises to the cytoplasm. It carries out the reaction N(2)-formyl-N(1)-(5-phospho-beta-D-ribosyl)glycinamide + L-glutamine + ATP + H2O = 2-formamido-N(1)-(5-O-phospho-beta-D-ribosyl)acetamidine + L-glutamate + ADP + phosphate + H(+). It functions in the pathway purine metabolism; IMP biosynthesis via de novo pathway; 5-amino-1-(5-phospho-D-ribosyl)imidazole from N(2)-formyl-N(1)-(5-phospho-D-ribosyl)glycinamide: step 1/2. In terms of biological role, phosphoribosylformylglycinamidine synthase involved in the purines biosynthetic pathway. Catalyzes the ATP-dependent conversion of formylglycinamide ribonucleotide (FGAR) and glutamine to yield formylglycinamidine ribonucleotide (FGAM) and glutamate. The polypeptide is Phosphoribosylformylglycinamidine synthase (Escherichia coli O6:K15:H31 (strain 536 / UPEC)).